The following is a 71-amino-acid chain: UPF0434 protein Meso_3270 (71 aa).

The protein belongs to the UPF0434 family.

The chain is UPF0434 protein Meso_3270 from Chelativorans sp. (strain BNC1).